The sequence spans 613 residues: Chaperone protein DnaK (613 aa).

Threonine 173 carries the phosphothreonine; by autocatalysis modification. Residues 577–613 (AKQAQAQQEGGAEGAQKADDNVVDAEYEEVNDDQEKK) are disordered. Positions 597 to 613 (NVVDAEYEEVNDDQEKK) are enriched in acidic residues.

This sequence belongs to the heat shock protein 70 family.

Acts as a chaperone. This is Chaperone protein DnaK from Bacillus pumilus (strain SAFR-032).